Consider the following 290-residue polypeptide: NAD kinase (290 aa).

Residue aspartate 72 is the Proton acceptor of the active site. Residues 72 to 73, lysine 77, 145 to 146, aspartate 175, 186 to 191, and alanine 210 contribute to the NAD(+) site; these read DG, NE, and TAYSLS.

The protein belongs to the NAD kinase family. The cofactor is a divalent metal cation.

The protein resides in the cytoplasm. It carries out the reaction NAD(+) + ATP = ADP + NADP(+) + H(+). In terms of biological role, involved in the regulation of the intracellular balance of NAD and NADP, and is a key enzyme in the biosynthesis of NADP. Catalyzes specifically the phosphorylation on 2'-hydroxyl of the adenosine moiety of NAD to yield NADP. This chain is NAD kinase, found in Bacteroides fragilis (strain ATCC 25285 / DSM 2151 / CCUG 4856 / JCM 11019 / LMG 10263 / NCTC 9343 / Onslow / VPI 2553 / EN-2).